The primary structure comprises 381 residues: S-(hydroxymethyl)glutathione dehydrogenase (381 aa).

Cysteine 49 is a Zn(2+) binding site. Position 50 (histidine 50) interacts with NAD(+). 7 residues coordinate Zn(2+): histidine 71, glutamate 72, cysteine 101, cysteine 104, cysteine 107, cysteine 115, and cysteine 178. Residues 203–208 (GGGIVG), aspartate 227, and 298–300 (IGV) each bind NAD(+).

It belongs to the zinc-containing alcohol dehydrogenase family. Class-III subfamily. Requires Zn(2+) as cofactor.

It catalyses the reaction a primary alcohol + NAD(+) = an aldehyde + NADH + H(+). The enzyme catalyses a secondary alcohol + NAD(+) = a ketone + NADH + H(+). The catalysed reaction is S-(hydroxymethyl)glutathione + NADP(+) = S-formylglutathione + NADPH + H(+). It carries out the reaction S-(hydroxymethyl)glutathione + NAD(+) = S-formylglutathione + NADH + H(+). It catalyses the reaction S-nitrosoglutathione + NADH + H(+) = S-(hydroxysulfenamide)glutathione + NAD(+). Oxidizes long-chain alcohols and, in the presence of glutathione, is able to oxidize formaldehyde. Also acts as a S-nitroso-glutathione reductase by catalyzing the NADH-dependent reduction of S-nitrosoglutathione, thereby regulating protein S-nitrosylation. The protein is S-(hydroxymethyl)glutathione dehydrogenase (FDH1) of Candida maltosa (Yeast).